Here is a 652-residue protein sequence, read N- to C-terminus: MAAATSSSPISLTAKPSSKSPLPISRFSLPFSLTPQKPSSRLHRPLAISAVLNSPVNVAPEKTDKIKTFISRYAPDEPRKGADILVEALERQGVETVFAYPGGASMEIHQALTRSSTIRNVLPRHEQGGVFAAEGYARSSGKPGICIATSGPGATNLVSGLADAMLDSVPLVAITGQVPRRMIGTDAFQETPIVEVTRSITKHNYLVMDVDDIPRIVQEAFFLATSGRPGPVLVDVPKDIQQQLAIPNWDQPMRLPGYMSRLPQPPEVSQLGQIVRLISESKRPVLYVGGGSLNSSEELGRFVELTGIPVASTLMGLGSYPCNDELSLQMLGMHGTVYANYAVEHSDLLLAFGVRFDDRVTGKLEAFASRAKIVHIDIDSAEIGKNKTPHVSVCGDVKLALQGMNKVLENRAEELKLDFGVWRSELSEQKQKFPLSFKTFGEAIPPQYAIQVLDELTQGKAIISTGVGQHQMWAAQFYKYRKPRQWLSSSGLGAMGFGLPAAIGASVANPDAIVVDIDGDGSFIMNVQELATIRVENLPVKILLLNNQHLGMVMQWEDRFYKANRAHTYLGDPARENEIFPNMLQFAGACGIPAARVTKKEELREAIQTMLDTPGPYLLDVICPHQEHVLPMIPSGGTFKDVITEGDGRTKY.

Residues 1–20 (MAAATSSSPISLTAKPSSKS) are compositionally biased toward polar residues. The disordered stretch occupies residues 1-23 (MAAATSSSPISLTAKPSSKSPLP). A chloroplast-targeting transit peptide spans 1-69 (MAAATSSSPI…PEKTDKIKTF (69 aa)). Thiamine diphosphate is bound at residue E126. FAD is bound by residues R228, 334–355 (HGTVYANYAVEHSDLLLAFGVR), and 377–396 (DIDSAEIGKNKTPHVSVCGD). Residues 469–549 (QHQMWAAQFY…VKILLLNNQH (81 aa)) are thiamine pyrophosphate binding. Residues D520 and N547 each coordinate Mg(2+).

The protein belongs to the TPP enzyme family. Requires Mg(2+) as cofactor. Thiamine diphosphate serves as cofactor.

Its subcellular location is the plastid. The protein localises to the chloroplast. It carries out the reaction 2 pyruvate + H(+) = (2S)-2-acetolactate + CO2. Its pathway is amino-acid biosynthesis; L-isoleucine biosynthesis; L-isoleucine from 2-oxobutanoate: step 1/4. It participates in amino-acid biosynthesis; L-valine biosynthesis; L-valine from pyruvate: step 1/4. The sequence is that of Acetolactate synthase 3, chloroplastic from Brassica napus (Rape).